The following is a 385-amino-acid chain: Meiosis-specific protein MEI4 (385 aa).

Positions 1–126 are interaction with REC114; the sequence is MDVQKWYLRT…LSQHFVESCT (126 aa). Residues 86 to 110 form a disordered region; the sequence is AQEPKSSESTLTSMEDSGCDLSNEQ. Positions 92 to 107 are enriched in polar residues; sequence SESTLTSMEDSGCDLS.

This sequence belongs to the MEI4L family. Part of the MCD recombinosome complex, at least composed of IHO1, REC114 and MEI4. Forms a complex with REC114; the interaction is required for MEI4 stability. Interacts (via N-terminal domain) with REC114 (via C-terminal domain). Interacts with IHO1.

It localises to the chromosome. In terms of biological role, required for DNA double-strand breaks (DSBs) formation in unsynapsed regions during meiotic recombination. Probably acts by forming a complex with IHO1 and REC114, which activates DSBs formation in unsynapsed regions, an essential step to ensure completion of synapsis. The polypeptide is Meiosis-specific protein MEI4 (Homo sapiens (Human)).